We begin with the raw amino-acid sequence, 385 residues long: ATP phosphoribosyltransferase regulatory subunit (385 aa).

Belongs to the class-II aminoacyl-tRNA synthetase family. HisZ subfamily. Heteromultimer composed of HisG and HisZ subunits.

The protein resides in the cytoplasm. The protein operates within amino-acid biosynthesis; L-histidine biosynthesis; L-histidine from 5-phospho-alpha-D-ribose 1-diphosphate: step 1/9. Functionally, required for the first step of histidine biosynthesis. May allow the feedback regulation of ATP phosphoribosyltransferase activity by histidine. This Bordetella avium (strain 197N) protein is ATP phosphoribosyltransferase regulatory subunit.